The chain runs to 151 residues: Large ribosomal subunit protein bL9 (151 aa).

This sequence belongs to the bacterial ribosomal protein bL9 family.

In terms of biological role, binds to the 23S rRNA. The chain is Large ribosomal subunit protein bL9 from Prochlorococcus marinus (strain MIT 9515).